Reading from the N-terminus, the 262-residue chain is Troponin T, slow skeletal muscle (262 aa).

Positions Met1–Pro31 are enriched in acidic residues. 2 disordered regions span residues Met1–Asp62 and Glu109–Val153. The residue at position 2 (Ser2) is a Phosphoserine; by CK2. Basic and acidic residues predominate over residues Val32–Lys41. Over residues Ser43–Ile55 the composition is skewed to pro residues. A compositionally biased stretch (basic and acidic residues) spans Glu109–Lys149.

It belongs to the troponin T family. In terms of assembly, interacts with TPM3. Expressed in adult soleus muscle.

In terms of biological role, troponin T is the tropomyosin-binding subunit of troponin, the thin filament regulatory complex which confers calcium-sensitivity to striated muscle actomyosin ATPase activity. The sequence is that of Troponin T, slow skeletal muscle (Tnnt1) from Mus musculus (Mouse).